Consider the following 804-residue polypeptide: Phenylalanine--tRNA ligase beta subunit (804 aa).

Residues arginine 38–alanine 148 enclose the tRNA-binding domain. A B5 domain is found at histidine 401–proline 476. The Mg(2+) site is built by aspartate 454, aspartate 460, glutamate 463, and glutamate 464. The FDX-ACB domain maps to serine 710 to arginine 803.

The protein belongs to the phenylalanyl-tRNA synthetase beta subunit family. Type 1 subfamily. In terms of assembly, tetramer of two alpha and two beta subunits. Requires Mg(2+) as cofactor.

Its subcellular location is the cytoplasm. It carries out the reaction tRNA(Phe) + L-phenylalanine + ATP = L-phenylalanyl-tRNA(Phe) + AMP + diphosphate + H(+). The protein is Phenylalanine--tRNA ligase beta subunit of Brucella melitensis biotype 1 (strain ATCC 23456 / CCUG 17765 / NCTC 10094 / 16M).